The chain runs to 43 residues: Myotoxin-1 (43 aa).

3 disulfide bridges follow: cysteine 4/cysteine 36, cysteine 11/cysteine 30, and cysteine 18/cysteine 37.

It belongs to the crotamine-myotoxin family. As to quaternary structure, monomer. Expressed by the venom gland.

It localises to the secreted. Cationic peptide that possesses multiple functions. It acts as a cell-penetrating peptide (CPP), and as a potent voltage-gated potassium channel (Kv) inhibitor. It exhibits antimicrobial activities, hind limb paralysis, and severe muscle necrosis by a non-enzymatic mechanism. The chain is Myotoxin-1 from Crotalus concolor (Midget faded rattlesnake).